The sequence spans 95 residues: Co-chaperonin GroES (95 aa).

It belongs to the GroES chaperonin family. Heptamer of 7 subunits arranged in a ring. Interacts with the chaperonin GroEL.

The protein localises to the cytoplasm. In terms of biological role, together with the chaperonin GroEL, plays an essential role in assisting protein folding. The GroEL-GroES system forms a nano-cage that allows encapsulation of the non-native substrate proteins and provides a physical environment optimized to promote and accelerate protein folding. GroES binds to the apical surface of the GroEL ring, thereby capping the opening of the GroEL channel. This Ruegeria sp. (strain TM1040) (Silicibacter sp.) protein is Co-chaperonin GroES.